Reading from the N-terminus, the 520-residue chain is 3-phosphoshikimate 1-carboxyvinyltransferase, chloroplastic (520 aa).

The transit peptide at 1–76 (MAQVSRICNG…KVMSSVSTAE (76 aa)) directs the protein to the chloroplast. Positions 20 to 39 (LSKSSQRKSPLSVSLKTQQH) are disordered. The 3-phosphoshikimate site is built by Lys99, Ser100, and Arg104. Residue Lys99 participates in phosphoenolpyruvate binding. Positions 177 and 207 each coordinate phosphoenolpyruvate. Residues Ser254, Ser255, Gln256, Ser282, Asp407, and Lys434 each contribute to the 3-phosphoshikimate site. Gln256 serves as a coordination point for phosphoenolpyruvate. The active-site Proton acceptor is Asp407. 3 residues coordinate phosphoenolpyruvate: Arg438, Arg480, and Lys505.

The protein belongs to the EPSP synthase family.

The protein resides in the plastid. The protein localises to the chloroplast. It carries out the reaction 3-phosphoshikimate + phosphoenolpyruvate = 5-O-(1-carboxyvinyl)-3-phosphoshikimate + phosphate. It participates in metabolic intermediate biosynthesis; chorismate biosynthesis; chorismate from D-erythrose 4-phosphate and phosphoenolpyruvate: step 6/7. Its function is as follows. Catalyzes the transfer of the enolpyruvyl moiety of phosphoenolpyruvate (PEP) to the 5-hydroxyl of shikimate-3-phosphate (S3P) to produce enolpyruvyl shikimate-3-phosphate and inorganic phosphate. This is 3-phosphoshikimate 1-carboxyvinyltransferase, chloroplastic from Arabidopsis thaliana (Mouse-ear cress).